Reading from the N-terminus, the 325-residue chain is Elongation factor P--(R)-beta-lysine ligase (325 aa).

Residue 76-78 participates in substrate binding; that stretch reads SPE. Residues 100 to 102 and Asn109 contribute to the ATP site; that span reads RNE. Tyr118 contributes to the substrate binding site. Position 244 to 245 (244 to 245) interacts with ATP; the sequence is EL. Residue Glu251 coordinates substrate. Gly300 is an ATP binding site.

The protein belongs to the class-II aminoacyl-tRNA synthetase family. EpmA subfamily. As to quaternary structure, homodimer.

The enzyme catalyses D-beta-lysine + L-lysyl-[protein] + ATP = N(6)-((3R)-3,6-diaminohexanoyl)-L-lysyl-[protein] + AMP + diphosphate + H(+). In terms of biological role, with EpmB is involved in the beta-lysylation step of the post-translational modification of translation elongation factor P (EF-P). Catalyzes the ATP-dependent activation of (R)-beta-lysine produced by EpmB, forming a lysyl-adenylate, from which the beta-lysyl moiety is then transferred to the epsilon-amino group of a conserved specific lysine residue in EF-P. The sequence is that of Elongation factor P--(R)-beta-lysine ligase from Citrobacter koseri (strain ATCC BAA-895 / CDC 4225-83 / SGSC4696).